Here is a 374-residue protein sequence, read N- to C-terminus: Isocitrate dehydrogenase [NAD] catalytic subunit 6, mitochondrial (374 aa).

Residues 1–44 constitute a mitochondrion transit peptide; the sequence is MTMTAFLARRLIGNGSSQILGTSSSSSGPFISVSRAFFSSSTPI. Residues arginine 127, arginine 137, arginine 158, and aspartate 245 each contribute to the substrate site. Mg(2+)-binding residues include aspartate 245, aspartate 269, and aspartate 273.

The protein belongs to the isocitrate and isopropylmalate dehydrogenases family. As to quaternary structure, heterooligomer of catalytic and regulatory subunits. Mg(2+) is required as a cofactor. Mn(2+) serves as cofactor. As to expression, ubiquitous. Predominantly expressed in leaves.

The protein localises to the mitochondrion. It catalyses the reaction D-threo-isocitrate + NAD(+) = 2-oxoglutarate + CO2 + NADH. Its function is as follows. Catalytic subunit of the NAD(+)-dependent isocitrate dehydrogenase involved in the oxidative decarboxylation of isocitrate to 2-oxoglutarate. Performs an essential role in the oxidative function of the citric acid cycle. The protein is Isocitrate dehydrogenase [NAD] catalytic subunit 6, mitochondrial (IDH6) of Arabidopsis thaliana (Mouse-ear cress).